Here is an 85-residue protein sequence, read N- to C-terminus: Large ribosomal subunit protein bL31B (85 aa).

The protein belongs to the bacterial ribosomal protein bL31 family. Type B subfamily. As to quaternary structure, part of the 50S ribosomal subunit.

This Serratia proteamaculans (strain 568) protein is Large ribosomal subunit protein bL31B.